A 144-amino-acid chain; its full sequence is Endoribonuclease YbeY (144 aa).

His-108, His-112, and His-118 together coordinate Zn(2+).

The protein belongs to the endoribonuclease YbeY family. It depends on Zn(2+) as a cofactor.

The protein resides in the cytoplasm. Single strand-specific metallo-endoribonuclease involved in late-stage 70S ribosome quality control and in maturation of the 3' terminus of the 16S rRNA. The chain is Endoribonuclease YbeY from Phytoplasma australiense.